The following is a 764-amino-acid chain: MAATLKSLKLLRYRALCSPSACGAARSVSYWNVSSKQHGGQDPPEHISLCHSAKRVKNICSTFSSRRILTTSSACPGLEFSKTSSSKASTLQLDSPRATRVDEEDVEVFDSFANIRVFLQLRPEYRVHSYNASETSQLLSVSESELILHKVTVYQNKLQAQVIVDYLCKLSSLPAEQHPVLLRSTSFALLCQLSVKKIQLFDTQDLINVLKAFVILGIPHSHSMLDVYETKCCHQVWEMSMDQLLLVADLWRYLGRKIPRFLNIFSSYLNLHWKDLSLSQLVHLIYVIGENRQVSQDLMQKLESLILKYIDLINLEEVGTICLGFFKSKTSLSEFVMRKIGDLACANMQHLSSHALVNIVKMFRFTHVDHINFMKQLGEIAPQRIPSLGVQGVMHLTLYCSALRFLDEGVMNAVAASLPCRVAHCRSKDVAKILWSFGTLNYKPPNAEEFYSSLINEIHRKMPEFNQYPEHLPTCLLGLAFSEYFPVELIDFALSPGFVRLAQERTKFNLIKELYTLDGTVGIECPDYRGNRLSTHLQQEGSEFLWNLAEKDMNSKPEFLETLFLLETMLGGPQYVKHHMILPHTRSSDLEVQLDVNLKPLPFNREATPAENVATLRLKHVGVSLTDDLMNQLLKGKARGHFQGKTESEPGQQPMELENKAAVPLGGFLCNVADKSGAMEMAGLCPSACMQTPGMKLAIQFTNRNQYCYGSRDLLGLHSMKRRQLARLGYRVVELSYWEWFPLLKRTRLEKLAFLHEKVFTSAL.

A Phosphoserine modification is found at Ser-95. Position 507 is an N6-acetyllysine (Lys-507). One can recognise an RAP domain in the interval 697–757; the sequence is LAIQFTNRNQ…RLEKLAFLHE (61 aa).

This sequence belongs to the FAST kinase family. As to quaternary structure, found in a complex with GRSF1, DDX28, DHX30 and FASTKD2. Associates with the 12S mitochondrial rRNA (12S mt-rRNA).

The protein localises to the mitochondrion matrix. It is found in the mitochondrion nucleoid. In terms of biological role, plays an important role in the processing of non-canonical mitochondrial mRNA precursors. The sequence is that of FAST kinase domain-containing protein 5, mitochondrial (FASTKD5) from Macaca fascicularis (Crab-eating macaque).